The following is a 659-amino-acid chain: Protein real-time (659 aa).

One can recognise a PRELI/MSF1 domain in the interval 3-175 (QKFQSPVRVY…FIGQLREEGI (173 aa)). The region spanning 286 to 462 (KPAVVVEHFP…FLGGPCKTMI (177 aa)) is the CRAL-TRIO domain. Phosphoserine is present on serine 477. The region spanning 512–631 (HRNLYKSVDL…QLNVFYEVLS (120 aa)) is the GOLD domain.

Restricted to the developing gut and central nervous system (CNS).

It is found in the mitochondrion. The sequence is that of Protein real-time (retm) from Drosophila melanogaster (Fruit fly).